The following is a 352-amino-acid chain: Pre-rRNA-processing protein ipi1 (352 aa).

It belongs to the IPI1/TEX10 family. Component of the RIX1 complex, composed of rrm-9/ipi1, rix1/ipi2 and ipi3 in a 1:2:2 stoichiometry. The complex interacts (via rix1) with mdn1 (via its hexameric AAA ATPase ring) and the pre-60S ribosome particles.

The protein resides in the nucleus. Functionally, component of the RIX1 complex required for processing of ITS2 sequences from 35S pre-rRNA. The polypeptide is Pre-rRNA-processing protein ipi1 (rrm-9) (Neurospora crassa (strain ATCC 24698 / 74-OR23-1A / CBS 708.71 / DSM 1257 / FGSC 987)).